A 411-amino-acid chain; its full sequence is ATP-dependent Clp protease ATP-binding subunit ClpX (411 aa).

The ClpX-type ZB domain occupies 1–51 (MAKKKDEEYCSFCGMPRTQVNLMLEGVHAHICDECALRAGEVVREALQKFK). Residues cysteine 10, cysteine 13, cysteine 32, and cysteine 35 each coordinate Zn(2+). An ATP-binding site is contributed by 119–126 (PTGTGKTL).

Belongs to the ClpX chaperone family. In terms of assembly, component of the ClpX-ClpP complex. Forms a hexameric ring that, in the presence of ATP, binds to fourteen ClpP subunits assembled into a disk-like structure with a central cavity, resembling the structure of eukaryotic proteasomes.

Functionally, ATP-dependent specificity component of the Clp protease. It directs the protease to specific substrates. Can perform chaperone functions in the absence of ClpP. The protein is ATP-dependent Clp protease ATP-binding subunit ClpX of Porphyromonas gingivalis (strain ATCC 33277 / DSM 20709 / CIP 103683 / JCM 12257 / NCTC 11834 / 2561).